The primary structure comprises 147 residues: Protein phosphatase 1 regulatory subunit 14B (147 aa).

Positions Met-1 to Pro-15 are enriched in low complexity. The disordered stretch occupies residues Met-1 to Lys-55. Ala-2 is subject to N-acetylalanine. Phosphoserine is present on Ser-21. Position 29 is a phosphotyrosine (Tyr-29). Residue Ser-32 is modified to Phosphoserine. Thr-57 is subject to Phosphothreonine. The stretch at Asp-61–Met-103 forms a coiled coil.

This sequence belongs to the PP1 inhibitor family. In terms of processing, phosphorylated primarily on Thr-57 by PKC (in vitro). An unknown Ser is also phosphorylated by PKC (in vitro).

The protein resides in the cytoplasm. In terms of biological role, inhibitor of PPP1CA. Has over 50-fold higher inhibitory activity when phosphorylated. In Sus scrofa (Pig), this protein is Protein phosphatase 1 regulatory subunit 14B (PPP1R14B).